The chain runs to 141 residues: Large ribosomal subunit protein uL11A (141 aa).

The protein belongs to the universal ribosomal protein uL11 family. In terms of assembly, part of the ribosomal stalk of the 50S ribosomal subunit. Interacts with L10 and the large rRNA to form the base of the stalk. L10 forms an elongated spine to which L12 dimers bind in a sequential fashion forming a multimeric L10(L12)X complex. Post-translationally, one or more lysine residues are methylated.

Its function is as follows. Forms part of the ribosomal stalk which helps the ribosome interact with GTP-bound translation factors. The sequence is that of Large ribosomal subunit protein uL11A from Halalkalibacterium halodurans (strain ATCC BAA-125 / DSM 18197 / FERM 7344 / JCM 9153 / C-125) (Bacillus halodurans).